The sequence spans 194 residues: uncharacterized protein (194 aa).

The 61-residue stretch at 6-66 (EFDTALVLHR…SAVKSYLEGK (61 aa)) folds into the HTH tetR-type domain. Positions 29–48 (SLQDLLSHLGIARQSLYDTY) form a DNA-binding region, H-T-H motif.

This is an uncharacterized protein from Bacillus subtilis (strain 168).